Here is a 262-residue protein sequence, read N- to C-terminus: Late embryogenesis abundant protein 31 (262 aa).

Residues 6–10 (QPKRP) carry the Nuclear localization signal (NLS) motif. SMP domains follow at residues 14–68 (VTYG…ANKR), 136–192 (ITIG…NHNA), and 201–260 (IKLI…NERA).

It belongs to the LEA type SMP family. In terms of tissue distribution, embryo specific, only in dry mature seeds.

It localises to the nucleus. The protein localises to the nucleolus. The protein resides in the cytoplasm. In terms of biological role, LEA proteins are late embryonic proteins abundant in higher plant seed embryos. The function of those proteins is not known. Promotes germination rate. Enhances cation toxicity (e.g. lithium ion) and osmotic stress (e.g. NaCl and sorbitol) tolerance during germination and in seedlings. In Arabidopsis thaliana (Mouse-ear cress), this protein is Late embryogenesis abundant protein 31.